The following is a 440-amino-acid chain: Probable exopolygalacturonase C (440 aa).

Positions 1–21 (MLITNPALLGILASLVPLALG) are cleaved as a signal peptide. Residues asparagine 84 and asparagine 151 are each glycosylated (N-linked (GlcNAc...) asparagine). 3 PbH1 repeats span residues 188–210 (GDDI…PFNT), 217–238 (GTNI…AVNT), and 240–261 (SHNI…SIGS). Asparagine 219 is a glycosylation site (N-linked (GlcNAc...) asparagine). Residue aspartate 231 is the Proton donor of the active site. Histidine 255 is an active-site residue. Residue asparagine 271 is glycosylated (N-linked (GlcNAc...) asparagine). The stretch at 272 to 293 (ITNLRFEDVTVIDALYAARFKS) is one PbH1 4 repeat. N-linked (GlcNAc...) asparagine glycosylation is present at asparagine 313. Cysteine 389 and cysteine 395 are disulfide-bonded. N-linked (GlcNAc...) asparagine glycosylation occurs at asparagine 434.

It belongs to the glycosyl hydrolase 28 family.

The protein resides in the secreted. It carries out the reaction [(1-&gt;4)-alpha-D-galacturonosyl](n) + H2O = alpha-D-galacturonate + [(1-&gt;4)-alpha-D-galacturonosyl](n-1). Functionally, specific in hydrolyzing the terminal glycosidic bond of polygalacturonic acid and oligogalacturonates. This chain is Probable exopolygalacturonase C (pgxC), found in Aspergillus fumigatus (strain CBS 144.89 / FGSC A1163 / CEA10) (Neosartorya fumigata).